The following is a 240-amino-acid chain: uncharacterized protein (240 aa).

Topologically, residues 1 to 85 (MSGFIKSTLL…LCGCCCWTNT (85 aa)) are cytoplasmic. The helical transmembrane segment at 86–106 (IGWAPLLALLPVIGPLLMYWV) threads the bilayer. The Extracellular portion of the chain corresponds to 107-131 (HDKLIELADDRYKLPAEIKVKMHGN). The helical transmembrane segment at 132 to 152 (IVIDLLISLVPILGSVFAWLH) threads the bilayer. Residues 153 to 240 (ACSTRNAAIV…TNGRPQRGYR (88 aa)) lie on the Cytoplasmic side of the membrane. The tract at residues 181 to 240 (QKEENEKHSNANTAPPVVGGNKNVNGNRNNSKMYNRPPVTAPPAPAYTRSTNGRPQRGYR) is disordered. Over residues 197-210 (VVGGNKNVNGNRNN) the composition is skewed to low complexity.

It localises to the membrane. This is an uncharacterized protein from Saccharomyces cerevisiae (strain ATCC 204508 / S288c) (Baker's yeast).